The chain runs to 636 residues: Threonine--tRNA ligase (636 aa).

The 61-residue stretch at Met-1–Thr-61 folds into the TGS domain. The catalytic stretch occupies residues Asp-238–Pro-528. Zn(2+)-binding residues include Cys-329, His-380, and His-505.

Belongs to the class-II aminoacyl-tRNA synthetase family. Homodimer. It depends on Zn(2+) as a cofactor.

Its subcellular location is the cytoplasm. It catalyses the reaction tRNA(Thr) + L-threonine + ATP = L-threonyl-tRNA(Thr) + AMP + diphosphate + H(+). Catalyzes the attachment of threonine to tRNA(Thr) in a two-step reaction: L-threonine is first activated by ATP to form Thr-AMP and then transferred to the acceptor end of tRNA(Thr). Also edits incorrectly charged L-seryl-tRNA(Thr). This Desulfatibacillum aliphaticivorans protein is Threonine--tRNA ligase.